Consider the following 188-residue polypeptide: dCTP deaminase (188 aa).

DCTP contacts are provided by residues lysine 111–arginine 116, threonine 135–glutamate 137, glutamine 156, tyrosine 170, lysine 179, and glutamine 180. Residue glutamate 137 is the Proton donor/acceptor of the active site.

Belongs to the dCTP deaminase family. In terms of assembly, homotrimer.

It carries out the reaction dCTP + H2O + H(+) = dUTP + NH4(+). It participates in pyrimidine metabolism; dUMP biosynthesis; dUMP from dCTP (dUTP route): step 1/2. Catalyzes the deamination of dCTP to dUTP. The polypeptide is dCTP deaminase (Rickettsia felis (strain ATCC VR-1525 / URRWXCal2) (Rickettsia azadi)).